A 265-amino-acid polypeptide reads, in one-letter code: S-adenosylmethionine decarboxylase proenzyme (265 aa).

Catalysis depends on S114, which acts as the Schiff-base intermediate with substrate; via pyruvic acid. S114 is subject to Pyruvic acid (Ser); by autocatalysis. H119 (proton acceptor; for processing activity) is an active-site residue. Residue C142 is the Proton donor; for catalytic activity of the active site.

It belongs to the prokaryotic AdoMetDC family. Type 2 subfamily. Heterooctamer of four alpha and four beta chains arranged as a tetramer of alpha/beta heterodimers. Pyruvate is required as a cofactor. Post-translationally, is synthesized initially as an inactive proenzyme. Formation of the active enzyme involves a self-maturation process in which the active site pyruvoyl group is generated from an internal serine residue via an autocatalytic post-translational modification. Two non-identical subunits are generated from the proenzyme in this reaction, and the pyruvate is formed at the N-terminus of the alpha chain, which is derived from the carboxyl end of the proenzyme. The post-translation cleavage follows an unusual pathway, termed non-hydrolytic serinolysis, in which the side chain hydroxyl group of the serine supplies its oxygen atom to form the C-terminus of the beta chain, while the remainder of the serine residue undergoes an oxidative deamination to produce ammonia and the pyruvoyl group blocking the N-terminus of the alpha chain.

It catalyses the reaction S-adenosyl-L-methionine + H(+) = S-adenosyl 3-(methylsulfanyl)propylamine + CO2. It functions in the pathway amine and polyamine biosynthesis; S-adenosylmethioninamine biosynthesis; S-adenosylmethioninamine from S-adenosyl-L-methionine: step 1/1. Catalyzes the decarboxylation of S-adenosylmethionine to S-adenosylmethioninamine (dcAdoMet), the propylamine donor required for the synthesis of the polyamines spermine and spermidine from the diamine putrescine. This chain is S-adenosylmethionine decarboxylase proenzyme, found in Buchnera aphidicola subsp. Acyrthosiphon pisum (strain APS) (Acyrthosiphon pisum symbiotic bacterium).